A 410-amino-acid polypeptide reads, in one-letter code: Putative transposase Rv3428c (410 aa).

Residues 40–220 form the Integrase catalytic domain; the sequence is VPRGPVDAGS…QPLRMFEAVE (181 aa). Positions 390–410 are disordered; the sequence is AANEPTTSSPASTAGGVPARP.

Belongs to the transposase IS21/IS408/IS1162 family.

The sequence is that of Putative transposase Rv3428c from Mycobacterium tuberculosis (strain ATCC 25618 / H37Rv).